A 394-amino-acid polypeptide reads, in one-letter code: Elongation factor Tu 2 (394 aa).

The tr-type G domain occupies 9 to 204; that stretch reads KPHCNIGTIG…SIDDYIPQPT (196 aa). The segment at 18-25 is G1; the sequence is GHVDHGKT. A GTP-binding site is contributed by 18 to 25; the sequence is GHVDHGKT. Mg(2+) is bound at residue Thr25. A G2 region spans residues 61–65; it reads GITIQ. Residues 82–85 form a G3 region; it reads DCPG. Residues 82–86 and 137–140 each bind GTP; these read DCPGH and NKID. The tract at residues 137-140 is G4; the sequence is NKID. The tract at residues 174 to 176 is G5; sequence SAL.

Belongs to the TRAFAC class translation factor GTPase superfamily. Classic translation factor GTPase family. EF-Tu/EF-1A subfamily. Monomer.

Its subcellular location is the cytoplasm. The catalysed reaction is GTP + H2O = GDP + phosphate + H(+). Functionally, GTP hydrolase that promotes the GTP-dependent binding of aminoacyl-tRNA to the A-site of ribosomes during protein biosynthesis. This is Elongation factor Tu 2 from Orientia tsutsugamushi (strain Boryong) (Rickettsia tsutsugamushi).